The sequence spans 449 residues: Tubulin alpha-8 chain (449 aa).

Positions 1–4 (MREC) match the MREC motif motif. The GTP site is built by Q11, E71, S140, G144, T145, T179, N206, and N228. E71 is a Mg(2+) binding site. The active site involves E254.

The protein belongs to the tubulin family. In terms of assembly, dimer of alpha and beta chains. A typical microtubule is a hollow water-filled tube with an outer diameter of 25 nm and an inner diameter of 15 nM. Alpha-beta heterodimers associate head-to-tail to form protofilaments running lengthwise along the microtubule wall with the beta-tubulin subunit facing the microtubule plus end conferring a structural polarity. Microtubules usually have 13 protofilaments but different protofilament numbers can be found in some organisms and specialized cells. It depends on Mg(2+) as a cofactor. In terms of processing, some glutamate residues at the C-terminus are polyglycylated, resulting in polyglycine chains on the gamma-carboxyl group. Glycylation is mainly limited to tubulin incorporated into axonemes (cilia and flagella) whereas glutamylation is prevalent in neuronal cells, centrioles, axonemes, and the mitotic spindle. Both modifications can coexist on the same protein on adjacent residues, and lowering polyglycylation levels increases polyglutamylation, and reciprocally. Cilia and flagella glycylation is required for their stability and maintenance. Flagella glycylation controls sperm motility. Some glutamate residues at the C-terminus are polyglutamylated, resulting in polyglutamate chains on the gamma-carboxyl group. Polyglutamylation plays a key role in microtubule severing by spastin (SPAST). SPAST preferentially recognizes and acts on microtubules decorated with short polyglutamate tails: severing activity by SPAST increases as the number of glutamates per tubulin rises from one to eight, but decreases beyond this glutamylation threshold. Glutamylation is also involved in cilia motility. Post-translationally, the C-terminal phenylalanine residue is cleaved by MATCAP1/KIAA0895L. In terms of tissue distribution, expressed at highest levels in the testis, followed by skeletal and heart muscle. Expressed at low levels in the developing brain.

It localises to the cytoplasm. The protein resides in the cytoskeleton. It carries out the reaction GTP + H2O = GDP + phosphate + H(+). Tubulin is the major constituent of microtubules, a cylinder consisting of laterally associated linear protofilaments composed of alpha- and beta-tubulin heterodimers. Microtubules grow by the addition of GTP-tubulin dimers to the microtubule end, where a stabilizing cap forms. Below the cap, tubulin dimers are in GDP-bound state, owing to GTPase activity of alpha-tubulin. This chain is Tubulin alpha-8 chain (Tuba8), found in Mus musculus (Mouse).